The primary structure comprises 488 residues: V-type proton ATPase subunit B 1 (488 aa).

This sequence belongs to the ATPase alpha/beta chains family. V-ATPase is a heteromultimeric enzyme composed of a peripheral catalytic V1 complex (main components: subunits A, B, C, D, E, and F) attached to an integral membrane V0 proton pore complex (main component: the proteolipid protein).

In terms of biological role, non-catalytic subunit of the peripheral V1 complex of vacuolar ATPase. V-ATPase is responsible for acidifying a variety of intracellular compartments in eukaryotic cells. This is V-type proton ATPase subunit B 1 from Hordeum vulgare (Barley).